Here is a 165-residue protein sequence, read N- to C-terminus: NADPH-dependent 7-cyano-7-deazaguanine reductase (165 aa).

Cysteine 56 serves as the catalytic Thioimide intermediate. The Proton donor role is filled by aspartate 63. Substrate is bound by residues 78–80 (VES) and 97–98 (HE).

The protein belongs to the GTP cyclohydrolase I family. QueF type 1 subfamily.

The protein localises to the cytoplasm. The catalysed reaction is 7-aminomethyl-7-carbaguanine + 2 NADP(+) = 7-cyano-7-deazaguanine + 2 NADPH + 3 H(+). It participates in tRNA modification; tRNA-queuosine biosynthesis. Catalyzes the NADPH-dependent reduction of 7-cyano-7-deazaguanine (preQ0) to 7-aminomethyl-7-deazaguanine (preQ1). The protein is NADPH-dependent 7-cyano-7-deazaguanine reductase of Bacillus pumilus (strain SAFR-032).